Here is a 457-residue protein sequence, read N- to C-terminus: Transcription factor E2F3 (457 aa).

The interval 80-171 (LLPSVPGTEP…PKSPSEKTRY (92 aa)) is disordered. The segment covering 93–102 (SLYTTPQGPS) has biased composition (polar residues). The segment at 96 to 145 (TTPQGPSSRVGLLQQPPAPGRGGGGGPPAKRRLELGESGHQYLSDGLKTP) is cyclin A/CDK2 binding. Residues 147-237 (GKGRAALRSP…KNNVQWMGCS (91 aa)) mediate DNA binding. Over residues 155–164 (SPDSPKTPKS) the composition is skewed to low complexity. Positions 196-217 (LNKAAEVLKVQKRRIYDITNVL) are leucine-zipper. The DEF box motif lies at 201–237 (EVLKVQKRRIYDITNVLEGIHLIKKKSKNNVQWMGCS). Residues 238-329 (LSEDGGMLAQ…VPDSIESLQI (92 aa)) are dimerization. The segment at 350–387 (HRPMKTNNQDHNGNIPKPTSKDLASNNSGHSDCSVSTA) is disordered. Positions 371 to 387 (DLASNNSGHSDCSVSTA) are enriched in polar residues. Positions 383-457 (SVSTANLSPL…LPLVEDFMCS (75 aa)) are transactivation. The retinoblastoma protein binding stretch occupies residues 424-441 (EDYLLSLGEEEGISDLFD).

Belongs to the E2F/DP family. Component of the DRTF1/E2F transcription factor complex. Binds cooperatively with TFDP1/Dp-1 to E2F sites. Interacts with retinoblastoma protein RB1 and related proteins (such as RBL1) that inhibit the E2F transactivation domain. Binds EAPP.

It is found in the nucleus. In terms of biological role, transcription activator that binds DNA cooperatively with DP proteins through the E2 recognition site, 5'-TTTC[CG]CGC-3' found in the promoter region of a number of genes whose products are involved in cell cycle regulation or in DNA replication. The DRTF1/E2F complex functions in the control of cell-cycle progression from G1 to S phase. E2F3 binds specifically to RB1 in a cell-cycle dependent manner. Inhibits adipogenesis, probably through the repression of CEBPA binding to its target gene promoters. The chain is Transcription factor E2F3 (E2f3) from Mus musculus (Mouse).